Reading from the N-terminus, the 224-residue chain is Zinc finger C4H2 domain-containing protein (224 aa).

The stretch at 12–97 (ENIKEIRNKT…NKLLESTRRL (86 aa)) forms a coiled coil. 2 disordered regions span residues 166–185 (QAAR…QPPP) and 204–224 (PLCK…KPDE). Residues 189 to 206 (CLSCHQQIHRNAPICPLC) form a C4H2-type zinc finger. Positions 208–224 (AKSRSRNPKKPKRKPDE) are enriched in basic residues.

It is found in the nucleus. It localises to the cytoplasm. The protein resides in the postsynaptic cell membrane. Plays a role in GABAergic and V2 interneurons differentiation. Involved in motoneuron development and in neuromuscular junction formation. In Danio rerio (Zebrafish), this protein is Zinc finger C4H2 domain-containing protein (zc4h2).